The primary structure comprises 89 residues: Small ribosomal subunit protein uS15 (89 aa).

Belongs to the universal ribosomal protein uS15 family. Part of the 30S ribosomal subunit. Forms a bridge to the 50S subunit in the 70S ribosome, contacting the 23S rRNA.

Its function is as follows. One of the primary rRNA binding proteins, it binds directly to 16S rRNA where it helps nucleate assembly of the platform of the 30S subunit by binding and bridging several RNA helices of the 16S rRNA. In terms of biological role, forms an intersubunit bridge (bridge B4) with the 23S rRNA of the 50S subunit in the ribosome. The protein is Small ribosomal subunit protein uS15 of Cellvibrio japonicus (strain Ueda107) (Pseudomonas fluorescens subsp. cellulosa).